Consider the following 307-residue polypeptide: Type 2A encapsulin shell protein (307 aa).

It belongs to the encapsulin family. Family 2A subfamily. In terms of assembly, homooligomeric. The encapsulin nanocompartment is formed by 60 subunits; monomers form pentamers which assemble to form shells. There are 12 charged pores where the pentamers meet as well as 3-fold axis channels and dimer channels. The N-terminus is blocked.

It is found in the encapsulin nanocompartment. It localises to the cytoplasm. The protein localises to the cytosol. Its subcellular location is the cell membrane. In terms of biological role, shell component of a type 2A encapsulin nanocompartment. Forms encapsulin nanocompartments about 24 nm in diameter from 60 monomers. Probably encapsulates at least cysteine desulfurase (CyD, AC O32975) and allows passage of cysteine into its interior, probably involved in sulfur metabolism. Expression in M.smegmatis generates a multimeric protein, whereas expression in E.coli does not. This chain is Type 2A encapsulin shell protein, found in Mycobacterium leprae (strain TN).